Reading from the N-terminus, the 108-residue chain is Parvalbumin beta 2 (108 aa).

Residue A1 is modified to N-acetylalanine. 2 EF-hand domains span residues K38 to G73 and L77 to G108. Ca(2+) is bound by residues D51, D53, S55, F57, E59, E62, D90, D92, D94, K96, and E101.

Belongs to the parvalbumin family.

Its function is as follows. In muscle, parvalbumin is thought to be involved in relaxation after contraction. It binds two calcium ions. In Merluccius bilinearis (Silver hake), this protein is Parvalbumin beta 2.